The sequence spans 330 residues: Methionyl-tRNA formyltransferase (330 aa).

121–124 (SLLP) is a binding site for (6S)-5,6,7,8-tetrahydrofolate.

The protein belongs to the Fmt family.

It carries out the reaction L-methionyl-tRNA(fMet) + (6R)-10-formyltetrahydrofolate = N-formyl-L-methionyl-tRNA(fMet) + (6S)-5,6,7,8-tetrahydrofolate + H(+). Functionally, attaches a formyl group to the free amino group of methionyl-tRNA(fMet). The formyl group appears to play a dual role in the initiator identity of N-formylmethionyl-tRNA by promoting its recognition by IF2 and preventing the misappropriation of this tRNA by the elongation apparatus. This chain is Methionyl-tRNA formyltransferase, found in Burkholderia orbicola (strain MC0-3).